Here is a 531-residue protein sequence, read N- to C-terminus: MSDLPATVLERIIEQAQRRPEAIALRRCDGTSALPYSELAAEVDRYAGALRAQSASRGSRVLVISDNGPETYLAVLACAKLGAIAVMADGNLPPATIDRFCQITDPVAVLIAPGSKVGSSSLPEGLAAIPAIRVDIGSGTGEFAHSPDTDRPATEPGLGADDPLAMIFTSGTTGEPKAVLLANRTFFAVPDILRNEGLNWVTWVDGETTYSPLPATHIGGLWWILTCLMRGGLCITGGENTPSLMQILNSNAVNTTCLVPTLLSKLVSELKSAATTVPSLRLLGYGGSRAIAADVRFIEATGVRTAQVYGLSETGCTALCLPTDDDSIAKIEAGAVGRPYPGVEVYLAADDEADGAGPNAPGAGPSASFGTLWIKSPANMLGYWSNPQRTQEVLIDGWVNTGDLLERHEDGFFYIKGRSSEMIISGGVNIAPDEVDRIAEGVPGVREAACFEIPDPEFGALVGLAVVAATDMDASAARKLKHTIAAHYRRESESVARPSTIVIVSEIPRTQSGKVMRTSLAAAANQVQTGG.

T169 serves as a coordination point for Mg(2+). The ATP site is built by I218, V308, and S312. E313 provides a ligand contact to Mg(2+). Residue D403 participates in ATP binding.

The protein belongs to the ATP-dependent AMP-binding enzyme family. Mg(2+) serves as cofactor.

It catalyses the reaction a (2E)-enoyl fatty acid + holo-[ACP] + ATP = a (2E)-enoyl-[ACP] + AMP + diphosphate. The catalysed reaction is a (2E)-enoyl fatty acid + ATP + H(+) = a (2E)-2-fatty-enoyl-AMP + diphosphate. It carries out the reaction a (2E)-2-fatty-enoyl-AMP + holo-[ACP] = a (2E)-enoyl-[ACP] + AMP + H(+). The enzyme catalyses (2E)-decenoate + holo-[ACP] + ATP = (2E)-decenoyl-[ACP] + AMP + diphosphate. It catalyses the reaction a (3R)-3-isocyanyl-fatty acid + holo-[ACP] + ATP = a (3R)-3-isocyanyl-fatty acyl-[ACP] + AMP + diphosphate. The catalysed reaction is a (3R)-3-isocyanyl-fatty acid + ATP + H(+) = a (3R)-3-isocyanyl-fatty acyl-AMP + diphosphate. It carries out the reaction a (3R)-3-isocyanyl-fatty acyl-AMP + holo-[ACP] = a (3R)-3-isocyanyl-fatty acyl-[ACP] + AMP + H(+). Its function is as follows. Acyl:acyl-carrier protein ligase involved in the biosynthesis of a unique class of isonitrile lipopeptides (INLPs) that seem to play a role in metal acquisition in M.marinum. Acts twice during the INLP pathway, catalyzing the activation of (2E)-2-decenoate as well as probably the corresponding (3R)-3-isocyanyl-fatty acid as acyl-adenylates (acyl-AMP), and then the acyl transfer to the dedicated acyl-carrier protein MmaB. This Mycobacterium marinum (strain ATCC BAA-535 / M) protein is Fatty acid--[acyl-carrier-protein] ligase MmaC.